The chain runs to 179 residues: Large ribosomal subunit protein uL5 (179 aa).

This sequence belongs to the universal ribosomal protein uL5 family. As to quaternary structure, part of the 50S ribosomal subunit; part of the 5S rRNA/L5/L18/L25 subcomplex. Contacts the 5S rRNA and the P site tRNA. Forms a bridge to the 30S subunit in the 70S ribosome.

In terms of biological role, this is one of the proteins that bind and probably mediate the attachment of the 5S RNA into the large ribosomal subunit, where it forms part of the central protuberance. In the 70S ribosome it contacts protein S13 of the 30S subunit (bridge B1b), connecting the 2 subunits; this bridge is implicated in subunit movement. Contacts the P site tRNA; the 5S rRNA and some of its associated proteins might help stabilize positioning of ribosome-bound tRNAs. The protein is Large ribosomal subunit protein uL5 of Dechloromonas aromatica (strain RCB).